Here is a 387-residue protein sequence, read N- to C-terminus: Krueppel-like factor 17 (387 aa).

Disordered stretches follow at residues 28-54 (FLDMSSSPGSGGVHTSWNRGPSGIRRV), 213-234 (SRDPQDFAMPPAGSPSLLPLES), and 257-277 (RREAQNSRAQERASGRSSPVS). Over residues 30-46 (DMSSSPGSGGVHTSWNR) the composition is skewed to polar residues. The segment covering 257-270 (RREAQNSRAQERAS) has biased composition (basic and acidic residues). 3 C2H2-type zinc fingers span residues 280–304 (YHCEYENCGKAYTKRSHLVSHQRKH), 310–334 (YKCTWEACTWSFFRSDELGRHTRIH), and 340–362 (HKCDQCGRQFMRSDHLRQHQRTH). The disordered stretch occupies residues 357–387 (QHQRTHMRMPRSPDPQADSGRRAGPLPAPHL).

Belongs to the Sp1 C2H2-type zinc-finger protein family.

The protein localises to the nucleus. In terms of biological role, transcription repressor that binds to the promoter of target genes and prevents their expression. Acts as a negative regulator of epithelial-mesenchymal transition and metastasis in breast cancer. Specifically binds the 5'-CACCC-3' sequence in the promoter of ID1, a key metastasis regulator in breast cancer, and repress its expression. May be a germ cell-specific transcription factor that plays important roles in spermatid differentiation and oocyte development. In Sus scrofa (Pig), this protein is Krueppel-like factor 17 (KLF17).